A 155-amino-acid polypeptide reads, in one-letter code: Ribosome maturation factor RimP (155 aa).

This sequence belongs to the RimP family.

The protein localises to the cytoplasm. Functionally, required for maturation of 30S ribosomal subunits. This is Ribosome maturation factor RimP from Listeria monocytogenes serovar 1/2a (strain ATCC BAA-679 / EGD-e).